Reading from the N-terminus, the 426-residue chain is Tyrosine-protein phosphatase non-receptor type 20 (426 aa).

The segment covering 1–10 (MSSPRKVRGK) has biased composition (basic residues). Residues 1 to 58 (MSSPRKVRGKTGRDNDEEEGNSGNLNLRNSLPSSSQKMTPTKPIFGNKMNSENVKPSH) are disordered. Residues 21-35 (NSGNLNLRNSLPSSS) are compositionally biased toward low complexity. At Ser-76 the chain carries Phosphoserine. Over residues 95 to 117 (NSMDSETAGPSKTVSPVLSGSSR) the composition is skewed to polar residues. The interval 95-124 (NSMDSETAGPSKTVSPVLSGSSRLSKDTET) is disordered. Ser-127 carries the phosphoserine modification. The Tyrosine-protein phosphatase domain occupies 165–418 (IIREFLELEQ…QFCYEIVLEV (254 aa)). Substrate-binding positions include Asp-329, 359–365 (CSAGVGR), and Gln-403. Cys-359 serves as the catalytic Phosphocysteine intermediate.

Belongs to the protein-tyrosine phosphatase family. Non-receptor class subfamily. In terms of tissue distribution, testis-specific. Specifically expressed in testicular germ cells that undergo meiosis (at protein level).

It localises to the nucleus. The protein resides in the cytoplasm. It is found in the cytoskeleton. Its subcellular location is the microtubule organizing center. The protein localises to the centrosome. It catalyses the reaction O-phospho-L-tyrosyl-[protein] + H2O = L-tyrosyl-[protein] + phosphate. Functionally, tyrosine-protein phosphatase targeted to sites of actin polymerization in response of varied extracellular stimuli. Has tyrosine phosphatase activity towards various tyrosyl phosphorylated substrates. In Mus musculus (Mouse), this protein is Tyrosine-protein phosphatase non-receptor type 20 (Ptpn20).